A 185-amino-acid polypeptide reads, in one-letter code: Crossover junction endodeoxyribonuclease RuvC (185 aa).

Residues Asp7, Glu66, and Asp137 contribute to the active site. Asp7, Glu66, and Asp137 together coordinate Mg(2+).

The protein belongs to the RuvC family. As to quaternary structure, homodimer which binds Holliday junction (HJ) DNA. The HJ becomes 2-fold symmetrical on binding to RuvC with unstacked arms; it has a different conformation from HJ DNA in complex with RuvA. In the full resolvosome a probable DNA-RuvA(4)-RuvB(12)-RuvC(2) complex forms which resolves the HJ. It depends on Mg(2+) as a cofactor.

Its subcellular location is the cytoplasm. The enzyme catalyses Endonucleolytic cleavage at a junction such as a reciprocal single-stranded crossover between two homologous DNA duplexes (Holliday junction).. Functionally, the RuvA-RuvB-RuvC complex processes Holliday junction (HJ) DNA during genetic recombination and DNA repair. Endonuclease that resolves HJ intermediates. Cleaves cruciform DNA by making single-stranded nicks across the HJ at symmetrical positions within the homologous arms, yielding a 5'-phosphate and a 3'-hydroxyl group; requires a central core of homology in the junction. The consensus cleavage sequence is 5'-(A/T)TT(C/G)-3'. Cleavage occurs on the 3'-side of the TT dinucleotide at the point of strand exchange. HJ branch migration catalyzed by RuvA-RuvB allows RuvC to scan DNA until it finds its consensus sequence, where it cleaves and resolves the cruciform DNA. This is Crossover junction endodeoxyribonuclease RuvC from Anaeromyxobacter sp. (strain K).